A 244-amino-acid polypeptide reads, in one-letter code: NAD-dependent protein deacylase SIR2rp3 (244 aa).

One can recognise a Deacetylase sirtuin-type domain in the interval 1–239; that stretch reads MRRPNGMIAI…PAWADEVLHG (239 aa). Residue 13-32 participates in NAD(+) binding; it reads GAGISAESGISTFRDQNGLW. 2 residues coordinate substrate: Tyr57 and Arg60. An NAD(+)-binding site is contributed by 95–98; sequence QNID. His113 functions as the Proton acceptor in the catalytic mechanism. The Zn(2+) site is built by Cys121 and Cys141. Residues 181 to 183 and Ala225 contribute to the NAD(+) site; that span reads GTS.

Belongs to the sirtuin family. Class III subfamily. Zn(2+) serves as cofactor.

It is found in the mitochondrion. It carries out the reaction N(6)-malonyl-L-lysyl-[protein] + NAD(+) + H2O = 2''-O-malonyl-ADP-D-ribose + nicotinamide + L-lysyl-[protein]. The enzyme catalyses N(6)-succinyl-L-lysyl-[protein] + NAD(+) + H2O = 2''-O-succinyl-ADP-D-ribose + nicotinamide + L-lysyl-[protein]. It catalyses the reaction N(6)-glutaryl-L-lysyl-[protein] + NAD(+) + H2O = 2''-O-glutaryl-ADP-D-ribose + nicotinamide + L-lysyl-[protein]. In terms of biological role, NAD-dependent lysine demalonylase, desuccinylase and deglutarylase that specifically removes malonyl, succinyl and glutaryl groups on target proteins. Has weak NAD-dependent protein deacetylase activity; however this activity may not be physiologically relevant in vivo. The polypeptide is NAD-dependent protein deacylase SIR2rp3 (SIR2rp3) (Trypanosoma brucei brucei (strain 927/4 GUTat10.1)).